We begin with the raw amino-acid sequence, 201 residues long: Large ribosomal subunit protein bL12m (201 aa).

The transit peptide at 1–38 (MLPVAASRCLWGPRLGLRGAALRLARQQMPSVCAARQL) directs the protein to the mitochondrion. 2 disordered regions span residues 37–60 (QLRS…APKE) and 109–130 (VSAA…QKER). Lys-128, Lys-141, Lys-145, and Lys-147 each carry N6-acetyllysine. N6-acetyllysine; alternate is present on Lys-153. Residue Lys-153 is modified to N6-succinyllysine; alternate. Residue Lys-153 forms a Glycyl lysine isopeptide (Lys-Gly) (interchain with G-Cter in ubiquitin) linkage. Lys-165 bears the N6-succinyllysine mark. Lys-166 and Lys-176 each carry N6-acetyllysine. Lys-181 carries the N6-acetyllysine; alternate modification. Lys-181 carries the post-translational modification N6-succinyllysine; alternate. Residue Lys-188 is modified to N6-acetyllysine.

Belongs to the bacterial ribosomal protein bL12 family. As to quaternary structure, component of the mitochondrial ribosome large subunit (39S) which comprises a 16S rRNA and about 50 distinct proteins. Interacts with NOA1. Post-translationally, two mature forms are produced by differential two-step proteolytic cleavage. Cleaved by the mitochondrial processing protease to produce the long mature form and subsequently by the mitochondrial intermediate protease to produce the short mature form. In terms of processing, in the presence of CUL3, undergoes 'Lys-63'-linked ubiquitination at Lys-153 which results in proteasomal degradation.

It localises to the mitochondrion matrix. Its function is as follows. As a component of the mitochondrial large ribosomal subunit, plays a role in mitochondrial translation. When present in mitochondria as a free protein not associated with the ribosome, associates with mitochondrial RNA polymerase POLRMT to activate transcription. Required for POLRMT stability. This is Large ribosomal subunit protein bL12m (Mrpl12) from Mus musculus (Mouse).